The chain runs to 105 residues: UPF0235 protein A1C_06510 (105 aa).

It belongs to the UPF0235 family.

The chain is UPF0235 protein A1C_06510 from Rickettsia akari (strain Hartford).